A 338-amino-acid chain; its full sequence is Hydroxyproline O-galactosyltransferase HPGT1 (338 aa).

Residues 1–12 (MARKGSSIRLSS) are Cytoplasmic-facing. A helical; Signal-anchor for type II membrane protein transmembrane segment spans residues 13–32 (SRISTLLLFMFATFASFYVA). The Lumenal portion of the chain corresponds to 33 to 338 (GRLWQESQTR…WSSEAICAGV (306 aa)).

It belongs to the glycosyltransferase 31 family. Mn(2+) is required as a cofactor. As to expression, expressed in roots, rosette leaves, cauline leaves, stems, flowers and siliques.

The protein resides in the golgi apparatus membrane. Its pathway is protein modification; protein glycosylation. In terms of biological role, possesses hydroxyproline O-galactosyltransferase activity. Transfers galactose from UDP-galactose to hydroxyproline residues in the arabinogalactan proteins (AGPs). Is specific for AGPs containing non-contiguous peptidyl hydroxyproline residues. The addition of galactose onto the peptidyl hydroxyproline residues in AGP core proteins represents the first committed step in arabinogalactan polysaccharide addition. AGP glycans play essential roles in both vegetative and reproductive plant growth. The polypeptide is Hydroxyproline O-galactosyltransferase HPGT1 (Arabidopsis thaliana (Mouse-ear cress)).